The primary structure comprises 697 residues: Glycine--tRNA ligase beta subunit (697 aa).

It belongs to the class-II aminoacyl-tRNA synthetase family. Tetramer of two alpha and two beta subunits.

Its subcellular location is the cytoplasm. It catalyses the reaction tRNA(Gly) + glycine + ATP = glycyl-tRNA(Gly) + AMP + diphosphate. The chain is Glycine--tRNA ligase beta subunit from Solidesulfovibrio magneticus (strain ATCC 700980 / DSM 13731 / RS-1) (Desulfovibrio magneticus).